Reading from the N-terminus, the 81-residue chain is Tissue- and phase-specific nuclear protein (81 aa).

As to expression, expressed in oviduct, where expression levels are higher in uterine sections than in tuba sections. No expression detected in small intestine and liver (at protein level).

It is found in the nucleus. This is Tissue- and phase-specific nuclear protein from Podarcis siculus (Italian wall lizard).